Reading from the N-terminus, the 31-residue chain is Cytochrome b6-f complex subunit 6 (31 aa).

A helical membrane pass occupies residues 4-26 (LTSYFGFLLAALTITSALFIGLN).

This sequence belongs to the PetL family. In terms of assembly, the 4 large subunits of the cytochrome b6-f complex are cytochrome b6, subunit IV (17 kDa polypeptide, PetD), cytochrome f and the Rieske protein, while the 4 small subunits are PetG, PetL, PetM and PetN. The complex functions as a dimer.

It is found in the plastid. It localises to the chloroplast thylakoid membrane. In terms of biological role, component of the cytochrome b6-f complex, which mediates electron transfer between photosystem II (PSII) and photosystem I (PSI), cyclic electron flow around PSI, and state transitions. PetL is important for photoautotrophic growth as well as for electron transfer efficiency and stability of the cytochrome b6-f complex. In Blitum bonus-henricus (Good King Henry), this protein is Cytochrome b6-f complex subunit 6.